A 458-amino-acid polypeptide reads, in one-letter code: UDP-N-acetylmuramate--L-alanine ligase (458 aa).

An ATP-binding site is contributed by 115–121 (GSHGKTT).

It belongs to the MurCDEF family.

The protein localises to the cytoplasm. It catalyses the reaction UDP-N-acetyl-alpha-D-muramate + L-alanine + ATP = UDP-N-acetyl-alpha-D-muramoyl-L-alanine + ADP + phosphate + H(+). It functions in the pathway cell wall biogenesis; peptidoglycan biosynthesis. Functionally, cell wall formation. The polypeptide is UDP-N-acetylmuramate--L-alanine ligase (Anaeromyxobacter dehalogenans (strain 2CP-C)).